A 346-amino-acid polypeptide reads, in one-letter code: Protein RecA (346 aa).

Residue 65–72 (GPESSGKT) coordinates ATP.

This sequence belongs to the RecA family.

It localises to the cytoplasm. Its function is as follows. Can catalyze the hydrolysis of ATP in the presence of single-stranded DNA, the ATP-dependent uptake of single-stranded DNA by duplex DNA, and the ATP-dependent hybridization of homologous single-stranded DNAs. It interacts with LexA causing its activation and leading to its autocatalytic cleavage. The sequence is that of Protein RecA from Enterococcus mundtii.